The chain runs to 375 residues: Guanine nucleotide-binding protein subunit beta (375 aa).

7 WD repeats span residues 63-93, 105-135, 154-185, 202-233, 246-276, 293-323, and 339-369; these read GHTG…IVWN, LPCA…SIYN, GHKG…VLWD, GHTA…RLWD, GHEG…RLFD, GDIP…YVWD, and SHEG…KIWA.

This sequence belongs to the WD repeat G protein beta family. As to quaternary structure, g proteins are composed of 3 units, alpha, beta and gamma.

In terms of biological role, guanine nucleotide-binding proteins (G proteins) are involved as a modulator or transducer in various transmembrane signaling systems. The beta and gamma chains are required for the GTPase activity, for replacement of GDP by GTP, and for G protein-effector interaction. This Nicotiana tabacum (Common tobacco) protein is Guanine nucleotide-binding protein subunit beta.